Consider the following 364-residue polypeptide: Transcription factor TGA4 (364 aa).

Residues 39-79 (PGSIIIPTNEKPDSLSEDTSHGTEGTPHKFDQEASTSRHPD) are disordered. Residues 48–79 (EKPDSLSEDTSHGTEGTPHKFDQEASTSRHPD) are compositionally biased toward basic and acidic residues. A bZIP domain is found at 78-141 (PDKIQRRLAQ…NGVDTNALSF (64 aa)). 2 coiled-coil regions span residues 79–127 (DKIQ…RQQG) and 257–277 (NLRQ…EKLQ). A basic motif region spans residues 80–100 (KIQRRLAQNREAARKSRLRKK). Positions 106-120 (LETSRLKLIHLEQEL) are leucine-zipper. The 211-residue stretch at 149–359 (IVAFEMEYGH…RALSSSWAAR (211 aa)) folds into the DOG1 domain. A disulfide bridge connects residues Cys256 and Cys262.

Belongs to the bZIP family. Binds DNA as a dimer. Interaction with the Dof domain proteins OBP1, OBP2 or OBP3 enhances the binding to the ocs element. Interacts with RAP2-3/EPB, an ethylene-responsive element binding protein. The reduced form interacts with NPR1. Predominantly expressed in roots.

The protein resides in the nucleus. Its function is as follows. Transcriptional activator that binds specifically to the DNA sequence 5'-TGACG-3'. Recognizes ocs elements like the as-1 motif of the cauliflower mosaic virus 35S promoter. Binding to the as-1-like cis elements mediate auxin- and salicylic acid-inducible transcription. May be involved in the induction of the systemic acquired resistance (SAR) via its interaction with NPR1. Could also bind to the Hex-motif (5'-TGACGTGG-3') another cis-acting element found in plant histone promoters. The chain is Transcription factor TGA4 (TGA4) from Arabidopsis thaliana (Mouse-ear cress).